The chain runs to 791 residues: Endonuclease MutS2 (791 aa).

Position 337–344 (337–344) interacts with ATP; sequence GPNTGGKT. A disordered region spans residues 689-715; that stretch reads AAQASQKKPEKSVRSSRGLRSSRASSE. The span at 703–713 shows a compositional bias: low complexity; sequence SSRGLRSSRAS. Positions 716–791 constitute a Smr domain; sequence LDLRGQRYEE…GTGATIVNLQ (76 aa).

This sequence belongs to the DNA mismatch repair MutS family. MutS2 subfamily. Homodimer. Binds to stalled ribosomes, contacting rRNA.

Endonuclease that is involved in the suppression of homologous recombination and thus may have a key role in the control of bacterial genetic diversity. In terms of biological role, acts as a ribosome collision sensor, splitting the ribosome into its 2 subunits. Detects stalled/collided 70S ribosomes which it binds and splits by an ATP-hydrolysis driven conformational change. Acts upstream of the ribosome quality control system (RQC), a ribosome-associated complex that mediates the extraction of incompletely synthesized nascent chains from stalled ribosomes and their subsequent degradation. Probably generates substrates for RQC. In Lactobacillus gasseri (strain ATCC 33323 / DSM 20243 / BCRC 14619 / CIP 102991 / JCM 1131 / KCTC 3163 / NCIMB 11718 / NCTC 13722 / AM63), this protein is Endonuclease MutS2.